Consider the following 289-residue polypeptide: GTPase Era (289 aa).

The region spanning 2-167 (KSGFISLIGR…LDEIYKYLPE (166 aa)) is the Era-type G domain. The interval 10-17 (GRTNAGKS) is G1. 10-17 (GRTNAGKS) contributes to the GTP binding site. The tract at residues 36–40 (NATRR) is G2. Residues 57–60 (DTPG) are G3. Residues 57–61 (DTPGL) and 116–119 (TKID) each bind GTP. The G4 stretch occupies residues 116–119 (TKID). The interval 146–148 (LSV) is G5. Positions 198 to 274 (VSDEVPYSTD…FLKINVKIDK (77 aa)) constitute a KH type-2 domain.

It belongs to the TRAFAC class TrmE-Era-EngA-EngB-Septin-like GTPase superfamily. Era GTPase family. Monomer.

Its subcellular location is the cytoplasm. It is found in the cell inner membrane. Its function is as follows. An essential GTPase that binds both GDP and GTP, with rapid nucleotide exchange. Plays a role in 16S rRNA processing and 30S ribosomal subunit biogenesis and possibly also in cell cycle regulation and energy metabolism. The chain is GTPase Era from Campylobacter fetus subsp. fetus (strain 82-40).